The chain runs to 157 residues: Cytochrome P450 monooxygenase atG (157 aa).

Position 97 (Cys97) interacts with heme.

It belongs to the cytochrome P450 family. It depends on heme as a cofactor.

Its pathway is secondary metabolite biosynthesis. Cytochrome P450 monooxygenase; part of the gene cluster that mediates the biosynthesis of terreic acid, a quinone epoxide inhibitor of Bruton's tyrosine kinase (BTK). The first step of the pathway is the synthesis of 6-methylsalicylic acid (6-MSA) by the 6-methylsalicylic acid synthase atX. In the biosynthesis of 6-MSA, atX utilizes one acetyl-CoA and three malonyl-CoAs as its substrates and catalyzes a series of programmed reactions including Claisen condensation, reduction, aldol cyclization, and the hydrolytic cleavage that yields 6-MSA. The 6-methylsalicylate 1-monooxygenase atA then catalyzes the decarboxylative hydroxylation of 6-MSA to 3-methylcatechol. The next step is the conversion of 3-methylcatechol to 3-methyl-1,2,4-benzenetriol by cytochrome P450 monooxygenase atE, which is enhanced by cytochrome P450 monooxygenase atG. Then, the epoxidase atD catalyzes the epoxidation and hydroxyl oxidation of 3-methyl-1,2,4-benzenetriol to terremutin. Lastly, GMC oxidoreductase atC oxidizes terremutin to terreic acid. The polypeptide is Cytochrome P450 monooxygenase atG (Aspergillus terreus (strain NIH 2624 / FGSC A1156)).